A 137-amino-acid polypeptide reads, in one-letter code: MPTINQLVRKGRVSKTKKSDSPALNKGYNSFKKRMTDQNAPQKRGVCTRVGTLTPKKPNSALRKYARVRLSNNMEVTAYIPGIGHNLQEHSVVLIRGGRVKDLPGVRYHIVRGALDTAGVEGRKQGRSKYGTKRPKK.

The segment at 1-43 (MPTINQLVRKGRVSKTKKSDSPALNKGYNSFKKRMTDQNAPQK) is disordered.

It belongs to the universal ribosomal protein uS12 family. Part of the 30S ribosomal subunit. Contacts proteins S8 and S17. May interact with IF1 in the 30S initiation complex.

In terms of biological role, with S4 and S5 plays an important role in translational accuracy. Its function is as follows. Interacts with and stabilizes bases of the 16S rRNA that are involved in tRNA selection in the A site and with the mRNA backbone. Located at the interface of the 30S and 50S subunits, it traverses the body of the 30S subunit contacting proteins on the other side and probably holding the rRNA structure together. The combined cluster of proteins S8, S12 and S17 appears to hold together the shoulder and platform of the 30S subunit. The protein is Small ribosomal subunit protein uS12 of Oceanobacillus iheyensis (strain DSM 14371 / CIP 107618 / JCM 11309 / KCTC 3954 / HTE831).